Consider the following 406-residue polypeptide: Tryptophan synthase beta chain (406 aa).

K95 carries the post-translational modification N6-(pyridoxal phosphate)lysine.

The protein belongs to the TrpB family. In terms of assembly, tetramer of two alpha and two beta chains. Pyridoxal 5'-phosphate serves as cofactor.

It carries out the reaction (1S,2R)-1-C-(indol-3-yl)glycerol 3-phosphate + L-serine = D-glyceraldehyde 3-phosphate + L-tryptophan + H2O. It functions in the pathway amino-acid biosynthesis; L-tryptophan biosynthesis; L-tryptophan from chorismate: step 5/5. Its function is as follows. The beta subunit is responsible for the synthesis of L-tryptophan from indole and L-serine. This chain is Tryptophan synthase beta chain, found in Azotobacter vinelandii (strain DJ / ATCC BAA-1303).